Here is a 282-residue protein sequence, read N- to C-terminus: NADPH-dependent 7-cyano-7-deazaguanine reductase (282 aa).

Substrate is bound at residue 88–90 (IES). 90 to 91 (SK) contacts NADPH. Catalysis depends on Cys190, which acts as the Thioimide intermediate. Asp197 serves as the catalytic Proton donor. 229 to 230 (HE) contributes to the substrate binding site. An NADPH-binding site is contributed by 258 to 259 (RG).

This sequence belongs to the GTP cyclohydrolase I family. QueF type 2 subfamily. In terms of assembly, homodimer.

It localises to the cytoplasm. The enzyme catalyses 7-aminomethyl-7-carbaguanine + 2 NADP(+) = 7-cyano-7-deazaguanine + 2 NADPH + 3 H(+). It participates in tRNA modification; tRNA-queuosine biosynthesis. In terms of biological role, catalyzes the NADPH-dependent reduction of 7-cyano-7-deazaguanine (preQ0) to 7-aminomethyl-7-deazaguanine (preQ1). This is NADPH-dependent 7-cyano-7-deazaguanine reductase from Escherichia coli O45:K1 (strain S88 / ExPEC).